The sequence spans 540 residues: CUB domain-containing protein 2 (540 aa).

The N-terminal stretch at 1-24 (MLAELGACLLLAMVLLDSDPGTQA) is a signal peptide. The Extracellular segment spans residues 25 to 516 (MEGVKCGGVL…GTMVTQDTSD (492 aa)). 6 disulfides stabilise this stretch: cysteine 30–cysteine 56, cysteine 83–cysteine 106, cysteine 145–cysteine 171, cysteine 198–cysteine 218, cysteine 257–cysteine 283, and cysteine 314–cysteine 336. CUB domains are found at residues 30–143 (CGGV…YQKD), 145–255 (CGGV…YFSG), and 257–373 (CQEV…YIGV). Asparagine 40 carries N-linked (GlcNAc...) asparagine glycosylation. Residue asparagine 267 is glycosylated (N-linked (GlcNAc...) asparagine). Asparagine 377, asparagine 435, and asparagine 436 each carry an N-linked (GlcNAc...) asparagine glycan. The chain crosses the membrane as a helical span at residues 517 to 537 (IVFLGLCILAGVLMIIAIVVL). Topologically, residues 538–540 (MLL) are cytoplasmic.

The protein resides in the membrane. This is CUB domain-containing protein 2 (Cdcp2) from Mus musculus (Mouse).